The sequence spans 494 residues: ATP synthase subunit beta (494 aa).

177 to 184 is an ATP binding site; sequence GGAGVGKT.

This sequence belongs to the ATPase alpha/beta chains family. As to quaternary structure, F-type ATPases have 2 components, CF(1) - the catalytic core - and CF(0) - the membrane proton channel. CF(1) has five subunits: alpha(3), beta(3), gamma(1), delta(1), epsilon(1). CF(0) has three main subunits: a(1), b(2) and c(9-12). The alpha and beta chains form an alternating ring which encloses part of the gamma chain. CF(1) is attached to CF(0) by a central stalk formed by the gamma and epsilon chains, while a peripheral stalk is formed by the delta and b chains.

The protein localises to the cell membrane. The catalysed reaction is ATP + H2O + 4 H(+)(in) = ADP + phosphate + 5 H(+)(out). Produces ATP from ADP in the presence of a proton gradient across the membrane. The catalytic sites are hosted primarily by the beta subunits. The chain is ATP synthase subunit beta from Bifidobacterium adolescentis (strain ATCC 15703 / DSM 20083 / NCTC 11814 / E194a).